We begin with the raw amino-acid sequence, 1828 residues long: Dedicator of cytokinesis protein 2 (1828 aa).

In terms of domain architecture, SH3 spans 8-69 (DKERHGVAIY…PTSFIHLKEV (62 aa)). Lys304 carries the N6-acetyllysine modification. In terms of domain architecture, C2 DOCK-type spans 423–607 (RNDIYITLLQ…DVFSISTLVC (185 aa)). Phosphoserine occurs at positions 588 and 593. Lys738 carries the post-translational modification N6-acetyllysine. The DOCKER domain maps to 1210 to 1621 (YKDNNREEMY…VEKEYGVREM (412 aa)). A disordered region spans residues 1652–1703 (SDCSTPSKVPAESFDLESAPPKTPKVEEEPISPGSTLPEVKLRRSKKRTKRS). A phosphoserine mark is found at Ser1683, Ser1704, Ser1729, and Ser1782.

Belongs to the DOCK family. Homodimer. Interacts with RAC1 and RAC2. Interacts with CRKL and VAV. Interacts with CD3Z. As to expression, specifically expressed in hematopoietic cells.

The protein localises to the endomembrane system. Its subcellular location is the cytoplasm. The protein resides in the cytoskeleton. Involved in cytoskeletal rearrangements required for lymphocyte migration in response of chemokines. Activates RAC1 and RAC2, but not CDC42, by functioning as a guanine nucleotide exchange factor (GEF), which exchanges bound GDP for free GTP. May also participate in IL2 transcriptional activation via the activation of RAC2. This is Dedicator of cytokinesis protein 2 (Dock2) from Mus musculus (Mouse).